Reading from the N-terminus, the 468-residue chain is Protein ABHD15 (468 aa).

Positions 1–23 (MPPWGAALALILAVLALLGLLGP) are cleaved as a signal peptide. A disordered region spans residues 33-61 (VGERTLPGAQDRDDGEEADGGGPADQFSD). Residues aspartate 360 and histidine 391 each act as charge relay system in the active site. Serine 434 carries the phosphoserine modification.

This sequence belongs to the AB hydrolase superfamily. AB hydrolase 4 family. Interacts with PDE3B; this interaction regulates PDE3B's stability and expression and, thereby, impacts the antilipolytic action of insulin.

Its subcellular location is the secreted. In terms of biological role, may regulate adipocyte lipolysis and liver lipid accumulation. This chain is Protein ABHD15, found in Homo sapiens (Human).